Here is a 321-residue protein sequence, read N- to C-terminus: Serine/threonine-protein phosphatase 4 catalytic subunit 2 (321 aa).

Mn(2+)-binding residues include Asp-64, His-66, Asp-92, and Asn-124. His-125 serves as the catalytic Proton donor. Mn(2+)-binding residues include His-174 and His-249.

This sequence belongs to the PPP phosphatase family. PP-4 (PP-X) subfamily. Serine/threonine-protein phosphatase 4 (PP4) occurs in different assemblies of the catalytic and one or more regulatory subunits. Mn(2+) is required as a cofactor.

It carries out the reaction O-phospho-L-seryl-[protein] + H2O = L-seryl-[protein] + phosphate. It catalyses the reaction O-phospho-L-threonyl-[protein] + H2O = L-threonyl-[protein] + phosphate. Its function is as follows. Protein phosphatase which seems to be involved in larval development but not essential for embryogenesis. The polypeptide is Serine/threonine-protein phosphatase 4 catalytic subunit 2 (Caenorhabditis elegans).